The chain runs to 198 residues: Imidazoleglycerol-phosphate dehydratase (198 aa).

It belongs to the imidazoleglycerol-phosphate dehydratase family.

It is found in the cytoplasm. It catalyses the reaction D-erythro-1-(imidazol-4-yl)glycerol 3-phosphate = 3-(imidazol-4-yl)-2-oxopropyl phosphate + H2O. It participates in amino-acid biosynthesis; L-histidine biosynthesis; L-histidine from 5-phospho-alpha-D-ribose 1-diphosphate: step 6/9. This chain is Imidazoleglycerol-phosphate dehydratase, found in Janthinobacterium sp. (strain Marseille) (Minibacterium massiliensis).